Here is an 843-residue protein sequence, read N- to C-terminus: Aminopeptidase N (843 aa).

Substrate contacts are provided by residues E120 and 252 to 256 (GAMEN). H288 contacts Zn(2+). E289 functions as the Proton acceptor in the catalytic mechanism. H292 and E311 together coordinate Zn(2+).

Belongs to the peptidase M1 family. In terms of assembly, monomer. The cofactor is Zn(2+).

The protein resides in the cytoplasm. The enzyme catalyses Release of an N-terminal amino acid, Xaa-|-Yaa- from a peptide, amide or arylamide. Xaa is preferably Ala, but may be most amino acids including Pro (slow action). When a terminal hydrophobic residue is followed by a prolyl residue, the two may be released as an intact Xaa-Pro dipeptide.. In terms of biological role, aminopeptidase with broad substrate specificity to several peptides. This is Aminopeptidase N (pepN) from Lactobacillus delbrueckii subsp. lactis.